Consider the following 464-residue polypeptide: Siroheme synthase (464 aa).

A precorrin-2 dehydrogenase /sirohydrochlorin ferrochelatase region spans residues 1-203 (MEYLPLFHNL…GQGAEAERLL (203 aa)). NAD(+) contacts are provided by residues 22 to 23 (EI) and 43 to 44 (PE). At serine 128 the chain carries Phosphoserine. A uroporphyrinogen-III C-methyltransferase region spans residues 216 to 464 (GEVYLVGAGP…AWFEGAQSEV (249 aa)). An S-adenosyl-L-methionine-binding site is contributed by proline 225. Aspartate 248 serves as the catalytic Proton acceptor. Lysine 270 acts as the Proton donor in catalysis. S-adenosyl-L-methionine is bound by residues 301 to 303 (GGD), isoleucine 306, 331 to 332 (TA), methionine 383, and glycine 412.

In the N-terminal section; belongs to the precorrin-2 dehydrogenase / sirohydrochlorin ferrochelatase family. It in the C-terminal section; belongs to the precorrin methyltransferase family.

The catalysed reaction is uroporphyrinogen III + 2 S-adenosyl-L-methionine = precorrin-2 + 2 S-adenosyl-L-homocysteine + H(+). The enzyme catalyses precorrin-2 + NAD(+) = sirohydrochlorin + NADH + 2 H(+). It catalyses the reaction siroheme + 2 H(+) = sirohydrochlorin + Fe(2+). It participates in cofactor biosynthesis; adenosylcobalamin biosynthesis; precorrin-2 from uroporphyrinogen III: step 1/1. It functions in the pathway cofactor biosynthesis; adenosylcobalamin biosynthesis; sirohydrochlorin from precorrin-2: step 1/1. The protein operates within porphyrin-containing compound metabolism; siroheme biosynthesis; precorrin-2 from uroporphyrinogen III: step 1/1. Its pathway is porphyrin-containing compound metabolism; siroheme biosynthesis; siroheme from sirohydrochlorin: step 1/1. It participates in porphyrin-containing compound metabolism; siroheme biosynthesis; sirohydrochlorin from precorrin-2: step 1/1. Its function is as follows. Multifunctional enzyme that catalyzes the SAM-dependent methylations of uroporphyrinogen III at position C-2 and C-7 to form precorrin-2 via precorrin-1. Then it catalyzes the NAD-dependent ring dehydrogenation of precorrin-2 to yield sirohydrochlorin. Finally, it catalyzes the ferrochelation of sirohydrochlorin to yield siroheme. The chain is Siroheme synthase from Pseudomonas fluorescens (strain ATCC BAA-477 / NRRL B-23932 / Pf-5).